We begin with the raw amino-acid sequence, 419 residues long: Acetylornithine aminotransferase (419 aa).

Pyridoxal 5'-phosphate is bound by residues 116–117 (GA) and Phe-149. Arg-152 contacts N(2)-acetyl-L-ornithine. 240 to 243 (DEVQ) provides a ligand contact to pyridoxal 5'-phosphate. Position 269 is an N6-(pyridoxal phosphate)lysine (Lys-269). Residue Ser-296 participates in N(2)-acetyl-L-ornithine binding. Residue Thr-297 participates in pyridoxal 5'-phosphate binding.

The protein belongs to the class-III pyridoxal-phosphate-dependent aminotransferase family. ArgD subfamily. In terms of assembly, homodimer. It depends on pyridoxal 5'-phosphate as a cofactor.

The protein localises to the cytoplasm. It carries out the reaction N(2)-acetyl-L-ornithine + 2-oxoglutarate = N-acetyl-L-glutamate 5-semialdehyde + L-glutamate. It functions in the pathway amino-acid biosynthesis; L-arginine biosynthesis; N(2)-acetyl-L-ornithine from L-glutamate: step 4/4. This Prochlorococcus marinus (strain SARG / CCMP1375 / SS120) protein is Acetylornithine aminotransferase.